The chain runs to 1673 residues: Protein-methionine sulfoxide oxidase mical3b (1673 aa).

Positions 2 to 492 (WDGQSEMCQA…RHLIDTGEGP (491 aa)) are monooxygenase domain. FAD contacts are provided by residues C96, 96-124 (CGLRTAIELGFLGARVVLVEKRDAFSRNN), E115, R117, R122, N124, and D396. The Calponin-homology (CH) domain occupies 512-618 (MARYSKLLSW…YLSQLHELLK (107 aa)). Residues 647 to 714 (SKLGQSLSRK…PKASEGHSKV (68 aa)) form a disordered region. Positions 661 to 671 (DKKEKEADSVG) are enriched in basic and acidic residues. Positions 791 to 853 (DVCYFCGRRV…KHHFSFRLAS (63 aa)) constitute an LIM zinc-binding domain. A compositionally biased stretch (low complexity) spans 882–892 (LSSLGSVGTAT). 5 disordered regions span residues 882 to 901 (LSSLGSVGTATPDSWSSSTH), 918 to 938 (RIELENYKPSPQKQDSPLQEV), 951 to 1100 (SLQE…KRSE), 1159 to 1188 (QSARICDSSTQTHSVTDLQETSPLGPTDGD), and 1357 to 1393 (GPDADGDVKEKKRSSLFSPRKSRKNGNAAAESGRETG). A compositionally biased stretch (basic and acidic residues) spans 973 to 992 (LVWKKGEELHARTNGERKLD). 2 stretches are compositionally biased toward acidic residues: residues 993-1002 (LEEELKEEEG) and 1010-1041 (EGEEEGEVSEEEQDEGDSSDESYEGCSDDPDI). Positions 1081–1094 (SDLTPDPSTTPESS) are enriched in low complexity. Polar residues predominate over residues 1159-1182 (QSARICDSSTQTHSVTDLQETSPL). 2 coiled-coil regions span residues 1475 to 1531 (EEEL…AVEK) and 1573 to 1638 (QEKN…VEQR). The region spanning 1495-1661 (KQEELRRLHR…EKEEDSDLEA (167 aa)) is the bMERB domain.

Belongs to the Mical family. It depends on FAD as a cofactor.

It localises to the cytoplasm. It is found in the cytoskeleton. The protein localises to the nucleus. The catalysed reaction is L-methionyl-[F-actin] + NADPH + O2 + H(+) = L-methionyl-(R)-S-oxide-[F-actin] + NADP(+) + H2O. In terms of biological role, monooxygenase that promotes depolymerization of F-actin by mediating oxidation of specific methionine residues on actin. Acts by modifying actin subunits through the addition of oxygen to form methionine-sulfoxide, leading to promote actin filament severing and prevent repolymerization. Involved in exocytic vesicles tethering and fusion: the monooxygenase activity is required for this process. This is Protein-methionine sulfoxide oxidase mical3b (mical3b) from Danio rerio (Zebrafish).